The primary structure comprises 294 residues: ATP synthase gamma chain (294 aa).

The protein belongs to the ATPase gamma chain family. F-type ATPases have 2 components, CF(1) - the catalytic core - and CF(0) - the membrane proton channel. CF(1) has five subunits: alpha(3), beta(3), gamma(1), delta(1), epsilon(1). CF(0) has three main subunits: a, b and c.

It localises to the cell inner membrane. Its function is as follows. Produces ATP from ADP in the presence of a proton gradient across the membrane. The gamma chain is believed to be important in regulating ATPase activity and the flow of protons through the CF(0) complex. This Nitratiruptor sp. (strain SB155-2) protein is ATP synthase gamma chain.